The primary structure comprises 227 residues: D-lyxose/D-mannose isomerase (227 aa).

Residues K90, 103-110 (HFHWRKRE), H171, E186, and D193 each bind D-fructose. Mn(2+) is bound by residues H103, H105, E110, and H171.

The protein belongs to the D-lyxose ketol-isomerase family. In terms of assembly, homodimer; disulfide-linked. Dimerization is facilitated through a disulfide bond between the two monomers of the dimeric enzyme. Requires Mn(2+) as cofactor.

The catalysed reaction is D-lyxose = D-xylulose. It carries out the reaction D-mannose = D-fructose. Functionally, sugar isomerase that catalyzes the reversible isomerization of D-lyxose to D-xylulose, and D-mannose to D-fructose. Shows similar activity toward D-lyxose and D-mannose with a turnover and catalytic efficiency for D-lyxose as a substrate only 1.1- and 1.3-fold higher than those for D-mannose, respectively. Shows weaker activity with L-gulose, D-talose, L-ribose and L-allose. Overexpression enables cell growth on the rare pentose D-lyxose as the sole carbon source. This chain is D-lyxose/D-mannose isomerase, found in Escherichia coli O157:H7.